Reading from the N-terminus, the 418-residue chain is Serine hydroxymethyltransferase (418 aa).

(6S)-5,6,7,8-tetrahydrofolate contacts are provided by residues L120 and 124 to 126; that span reads GHL. K229 carries the N6-(pyridoxal phosphate)lysine modification.

It belongs to the SHMT family. As to quaternary structure, homodimer. Pyridoxal 5'-phosphate serves as cofactor.

The protein localises to the cytoplasm. It carries out the reaction (6R)-5,10-methylene-5,6,7,8-tetrahydrofolate + glycine + H2O = (6S)-5,6,7,8-tetrahydrofolate + L-serine. It functions in the pathway one-carbon metabolism; tetrahydrofolate interconversion. It participates in amino-acid biosynthesis; glycine biosynthesis; glycine from L-serine: step 1/1. In terms of biological role, catalyzes the reversible interconversion of serine and glycine with tetrahydrofolate (THF) serving as the one-carbon carrier. This reaction serves as the major source of one-carbon groups required for the biosynthesis of purines, thymidylate, methionine, and other important biomolecules. Also exhibits THF-independent aldolase activity toward beta-hydroxyamino acids, producing glycine and aldehydes, via a retro-aldol mechanism. In Myxococcus xanthus (strain DK1622), this protein is Serine hydroxymethyltransferase.